A 366-amino-acid chain; its full sequence is tRNA/tmRNA (uracil-C(5))-methyltransferase (366 aa).

S-adenosyl-L-methionine contacts are provided by Gln190, Tyr218, Asn223, Glu239, and Asp299. Cys324 serves as the catalytic Nucleophile. The Proton acceptor role is filled by Glu358.

It belongs to the class I-like SAM-binding methyltransferase superfamily. RNA M5U methyltransferase family. TrmA subfamily.

The enzyme catalyses uridine(54) in tRNA + S-adenosyl-L-methionine = 5-methyluridine(54) in tRNA + S-adenosyl-L-homocysteine + H(+). The catalysed reaction is uridine(341) in tmRNA + S-adenosyl-L-methionine = 5-methyluridine(341) in tmRNA + S-adenosyl-L-homocysteine + H(+). In terms of biological role, dual-specificity methyltransferase that catalyzes the formation of 5-methyluridine at position 54 (m5U54) in all tRNAs, and that of position 341 (m5U341) in tmRNA (transfer-mRNA). The polypeptide is tRNA/tmRNA (uracil-C(5))-methyltransferase (Escherichia fergusonii (strain ATCC 35469 / DSM 13698 / CCUG 18766 / IAM 14443 / JCM 21226 / LMG 7866 / NBRC 102419 / NCTC 12128 / CDC 0568-73)).